A 793-amino-acid polypeptide reads, in one-letter code: Pentatricopeptide repeat-containing protein At1g03100, mitochondrial (793 aa).

A mitochondrion-targeting transit peptide spans 1 to 87 (MFSLRKTKLQ…REAISSISGS (87 aa)). PPR repeat units lie at residues 257-291 (NTQV…GVKA), 292-322 (DANL…IDEA), 330-364 (FWQF…GKVA), 458-492 (TEEI…DSPV), 495-529 (DNSM…GVRT), 530-564 (GSSV…GIQL), 565-599 (DSSC…KILR), 601-631 (GNQK…IREV), 637-671 (GVHD…GHSP), 672-707 (NAQT…AAAT), and 713-747 (DQEL…NMFV).

This sequence belongs to the PPR family. P subfamily.

The protein resides in the mitochondrion. The protein is Pentatricopeptide repeat-containing protein At1g03100, mitochondrial of Arabidopsis thaliana (Mouse-ear cress).